A 338-amino-acid polypeptide reads, in one-letter code: MO25-like protein 2 (338 aa).

The protein belongs to the Mo25 family.

Its subcellular location is the cytoplasm. It localises to the cytoskeleton. The protein localises to the spindle pole. In terms of biological role, regulates asymmetric cell division in Q.p neuroblast lineage. Plays a role in cell shedding during embryogenesis. This chain is MO25-like protein 2 (mop-25.2), found in Caenorhabditis elegans.